Consider the following 146-residue polypeptide: MORN repeat-containing protein 4 (146 aa).

MORN repeat units follow at residues 16-38, 39-61, 62-84, and 85-107; these read YRGE…DGGT, YLGH…DGSR, YEGE…DNMT, and FEGE…DGSH.

Interacts with MYO3A.

The protein localises to the cytoplasm. The protein resides in the cell projection. Its subcellular location is the filopodium tip. It localises to the stereocilium. Plays a role in promoting axonal degeneration following neuronal injury by toxic insult or trauma. This chain is MORN repeat-containing protein 4 (MORN4), found in Homo sapiens (Human).